We begin with the raw amino-acid sequence, 241 residues long: ATP synthase subunit a (241 aa).

Helical transmembrane passes span Gly-30–Gly-50, Phe-91–Trp-111, Ile-128–Ser-148, Leu-193–Leu-213, and Gly-214–Gly-234.

It belongs to the ATPase A chain family. As to quaternary structure, F-type ATPases have 2 components, CF(1) - the catalytic core - and CF(0) - the membrane proton channel. CF(1) has five subunits: alpha(3), beta(3), gamma(1), delta(1), epsilon(1). CF(0) has four main subunits: a, b, b' and c.

The protein resides in the cellular thylakoid membrane. Key component of the proton channel; it plays a direct role in the translocation of protons across the membrane. The protein is ATP synthase subunit a of Prochlorococcus marinus (strain MIT 9313).